The sequence spans 447 residues: Ribosomal protein uS12 methylthiotransferase RimO (447 aa).

An MTTase N-terminal domain is found at 15–125 (PRVGFVSLGC…VMQAIHRHLP (111 aa)). [4Fe-4S] cluster contacts are provided by Cys24, Cys60, Cys89, Cys156, Cys160, and Cys163. Residues 142 to 379 (LTPKHYAYLK…MQWQEEISKK (238 aa)) form the Radical SAM core domain. The TRAM domain maps to 379-447 (KRLAGKKGRI…GIHDLWAKKI (69 aa)).

The protein belongs to the methylthiotransferase family. RimO subfamily. Requires [4Fe-4S] cluster as cofactor.

The protein localises to the cytoplasm. The enzyme catalyses L-aspartate(89)-[ribosomal protein uS12]-hydrogen + (sulfur carrier)-SH + AH2 + 2 S-adenosyl-L-methionine = 3-methylsulfanyl-L-aspartate(89)-[ribosomal protein uS12]-hydrogen + (sulfur carrier)-H + 5'-deoxyadenosine + L-methionine + A + S-adenosyl-L-homocysteine + 2 H(+). Functionally, catalyzes the methylthiolation of an aspartic acid residue of ribosomal protein uS12. The polypeptide is Ribosomal protein uS12 methylthiotransferase RimO (Nitrosomonas europaea (strain ATCC 19718 / CIP 103999 / KCTC 2705 / NBRC 14298)).